The chain runs to 774 residues: Mastermind-like domain-containing protein 1 (774 aa).

Disordered regions lie at residues 257–279 (STGISYSIPSTSKQIVSPSSSMA), 310–365 (LAAS…PQSL), 386–421 (ALLSSMTSSSNAALGPAMPYAPEKLPSPALTQQPQF), 442–473 (HLMSALPASNPGPSPPYRPEKLSSPGLPQQSF), 525–609 (GMAS…QPDH), 656–678 (PQHQHGNSFTSRQDPQPGDVSPS), and 755–774 (LPSCDATARGTEIRSYGNDP). The span at 331–361 (LPPPGLSPPYRPVPSPHPPPLPLPPPPPPFS) shows a compositional bias: pro residues. Over residues 386-397 (ALLSSMTSSSNA) the composition is skewed to polar residues. Low complexity predominate over residues 574 to 609 (QQPTPTQASSATASSTATATLQLQQQQQQQQQQPDH). Over residues 656 to 669 (PQHQHGNSFTSRQD) the composition is skewed to polar residues. Ser-676 carries the phosphoserine modification.

Belongs to the mastermind family. As to expression, expressed in fetal brain, fetal ovary and fetal testis. Expressed in adult brain, ovary, skin, testis, uterus. Highly expressed in skeletal muscle.

It localises to the nucleus. Transactivates the HES3 promoter independently of NOTCH proteins. HES3 is a non-canonical NOTCH target gene which lacks binding sites for RBPJ. This chain is Mastermind-like domain-containing protein 1 (MAMLD1), found in Homo sapiens (Human).